The following is a 271-amino-acid chain: Probable CAAX prenyl protease 2 (271 aa).

The next 2 helical transmembrane spans lie at 3–23 (VYLI…TFPV) and 42–62 (CISV…IIGP). Residues E126 and H160 each act as proton donor/acceptor in the active site. 2 helical membrane passes run 174–194 (AYIA…VFGW) and 236–256 (IYYT…GITD).

The protein belongs to the peptidase U48 family.

The protein resides in the endoplasmic reticulum membrane. It carries out the reaction Hydrolyzes the peptide bond -P2-(S-farnesyl or geranylgeranyl)C-P1'-P2'-P3'-COOH where P1' and P2' are amino acids with aliphatic sidechains and P3' is any C-terminal residue.. Functionally, protease involved in the processing of a variety of prenylated proteins containing the C-terminal CAAX motif, where C is a cysteine modified with an isoprenoid lipid, A is an aliphatic amino acid and X is any C-terminal amino acid. Proteolytically removes the C-terminal three residues of farnesylated proteins, leaving the prenylated cysteine as the new C-terminus. The chain is Probable CAAX prenyl protease 2 from Schizosaccharomyces pombe (strain 972 / ATCC 24843) (Fission yeast).